A 475-amino-acid chain; its full sequence is tRNA-2-methylthio-N(6)-dimethylallyladenosine synthase (475 aa).

Over residues 1–10 (MHETTLKREG) the composition is skewed to basic and acidic residues. Positions 1–25 (MHETTLKREGASTPSNPTPSTHAAG) are disordered. Residues 12 to 23 (STPSNPTPSTHA) show a composition bias toward polar residues. Residues 27-144 (GKIYIRTFGC…LPELIRRRRD (118 aa)) form the MTTase N-terminal domain. Positions 36, 73, 107, 181, 185, and 188 each coordinate [4Fe-4S] cluster. The Radical SAM core domain maps to 167–400 (RVEGATAFVS…QALINEQAAA (234 aa)). Residues 403–466 (QSMVGTRQRL…TNSLRGRVAG (64 aa)) form the TRAM domain.

Belongs to the methylthiotransferase family. MiaB subfamily. In terms of assembly, monomer. It depends on [4Fe-4S] cluster as a cofactor.

The protein resides in the cytoplasm. It carries out the reaction N(6)-dimethylallyladenosine(37) in tRNA + (sulfur carrier)-SH + AH2 + 2 S-adenosyl-L-methionine = 2-methylsulfanyl-N(6)-dimethylallyladenosine(37) in tRNA + (sulfur carrier)-H + 5'-deoxyadenosine + L-methionine + A + S-adenosyl-L-homocysteine + 2 H(+). Its function is as follows. Catalyzes the methylthiolation of N6-(dimethylallyl)adenosine (i(6)A), leading to the formation of 2-methylthio-N6-(dimethylallyl)adenosine (ms(2)i(6)A) at position 37 in tRNAs that read codons beginning with uridine. The protein is tRNA-2-methylthio-N(6)-dimethylallyladenosine synthase of Bordetella avium (strain 197N).